Consider the following 187-residue polypeptide: MTSRSLLPFVLSLLLPRIIMAQSYLELYSHQWLNNWKSLHLLNELDGQFPLHCLKESMNFKLPAEMLHPHQFQQENATEAIHDLLQQIFNIFSRNHSQTGWDEAIVEKFLHGVHQEMVWLELFLEEEMGWENSTLRRDISLHIKSYFKRMMDYLKGRNYSSCAWEVIRMETKRSCLVIYRLTRKLKK.

The first 21 residues, 1–21, serve as a signal peptide directing secretion; sequence MTSRSLLPFVLSLLLPRIIMA. Tyr-24 is modified (phosphotyrosine). A disulfide bridge links Cys-53 with Cys-162. Residues Asn-76, Asn-95, Asn-132, and Asn-158 are each glycosylated (N-linked (GlcNAc...) asparagine).

It belongs to the alpha/beta interferon family. In terms of assembly, monomer.

It is found in the secreted. Its function is as follows. Type I interferon cytokine that plays a key role in the innate immune response to infection, developing tumors and other inflammatory stimuli. Signals via binding to high-affinity (IFNAR2) and low-affinity (IFNAR1) heterodimeric receptor, activating the canonical Jak-STAT signaling pathway resulting in transcriptional activation or repression of interferon-regulated genes that encode the effectors of the interferon response, such as antiviral proteins, regulators of cell proliferation and differentiation, and immunoregulatory proteins. Signals mostly via binding to a IFNAR1-IFNAR2 heterodimeric receptor, but can also function with IFNAR1 alone and independently of Jak-STAT pathways. Elicits a wide variety of responses, including antiviral and antibacterial activities, and can regulate the development of B-cells, myelopoiesis and lipopolysaccharide (LPS)-inducible production of tumor necrosis factor. Plays a role in neuronal homeostasis by regulating dopamine turnover and protecting dopaminergic neurons: acts by promoting neuronal autophagy and alpha-synuclein clearance, thereby preventing dopaminergic neuron loss. IFNB1 is more potent than interferon-alpha (IFN-alpha) in inducing the apoptotic and antiproliferative pathways required for control of tumor cell growth. The polypeptide is Interferon beta (IFNB1) (Tachyglossus aculeatus aculeatus (Southeast Australian short-beaked echidna)).